A 526-amino-acid polypeptide reads, in one-letter code: Sterol 14-alpha demethylase CYP51A (526 aa).

Residues 27–47 (IGFAVFLVLSVVLNVLNQLLF) traverse the membrane as a helical segment. Tyr123 is a lanosterol binding site. Residue Cys470 participates in heme binding.

Belongs to the cytochrome P450 family. It depends on heme as a cofactor.

It is found in the endoplasmic reticulum membrane. The catalysed reaction is a 14alpha-methyl steroid + 3 reduced [NADPH--hemoprotein reductase] + 3 O2 = a Delta(14) steroid + formate + 3 oxidized [NADPH--hemoprotein reductase] + 4 H2O + 4 H(+). It carries out the reaction a 14alpha-methyl steroid + reduced [NADPH--hemoprotein reductase] + O2 = a 14alpha-hydroxymethyl steroid + oxidized [NADPH--hemoprotein reductase] + H2O + H(+). The enzyme catalyses a 14alpha-hydroxymethyl steroid + reduced [NADPH--hemoprotein reductase] + O2 = a 14alpha-formyl steroid + oxidized [NADPH--hemoprotein reductase] + 2 H2O + H(+). It catalyses the reaction a 14alpha-formyl steroid + reduced [NADPH--hemoprotein reductase] + O2 = a Delta(14) steroid + formate + oxidized [NADPH--hemoprotein reductase] + H2O + 2 H(+). The catalysed reaction is lanosterol + 3 reduced [NADPH--hemoprotein reductase] + 3 O2 = 4,4-dimethyl-5alpha-cholesta-8,14,24-trien-3beta-ol + formate + 3 oxidized [NADPH--hemoprotein reductase] + 4 H2O + 4 H(+). It carries out the reaction lanosterol + reduced [NADPH--hemoprotein reductase] + O2 = 32-hydroxylanosterol + oxidized [NADPH--hemoprotein reductase] + H2O + H(+). The enzyme catalyses 32-hydroxylanosterol + reduced [NADPH--hemoprotein reductase] + O2 = 32-oxolanosterol + oxidized [NADPH--hemoprotein reductase] + 2 H2O + H(+). It catalyses the reaction 32-oxolanosterol + reduced [NADPH--hemoprotein reductase] + O2 = 4,4-dimethyl-5alpha-cholesta-8,14,24-trien-3beta-ol + formate + oxidized [NADPH--hemoprotein reductase] + H2O + 2 H(+). The catalysed reaction is eburicol + 3 reduced [NADPH--hemoprotein reductase] + 3 O2 = 14-demethyleburicol + formate + 3 oxidized [NADPH--hemoprotein reductase] + 4 H2O + 4 H(+). It carries out the reaction eburicol + reduced [NADPH--hemoprotein reductase] + O2 = 32-hydroxyeburicol + oxidized [NADPH--hemoprotein reductase] + H2O + H(+). The enzyme catalyses 32-hydroxyeburicol + reduced [NADPH--hemoprotein reductase] + O2 = 32-oxoeburicol + oxidized [NADPH--hemoprotein reductase] + 2 H2O + H(+). It catalyses the reaction 32-oxoeburicol + reduced [NADPH--hemoprotein reductase] + O2 = 14-demethyleburicol + formate + oxidized [NADPH--hemoprotein reductase] + H2O + 2 H(+). The protein operates within steroid metabolism; ergosterol biosynthesis. In terms of biological role, together with cyp51A and cyp51C, encodes the sterol 14alpha-demethylase that plays a critical role in the third module of ergosterol biosynthesis pathway, being ergosterol the major sterol component in fungal membranes that participates in a variety of functions. Essential for ascospore production. The third module or late pathway involves the ergosterol synthesis itself through consecutive reactions that mainly occur in the endoplasmic reticulum (ER) membrane. In filamentous fungi, during the initial step of this module, lanosterol (lanosta-8,24-dien-3beta-ol) can be metabolized to eburicol. Sterol 14alpha-demethylase catalyzes the three-step oxidative removal of the 14alpha-methyl group (C-32) of both these sterols in the form of formate, and converts eburicol and lanosterol to 14-demethyleburicol (4,4,24-trimethylergosta-8,14,24(28)-trienol) and 4,4-dimethyl-5alpha-cholesta-8,14,24-trien-3beta-ol, respectively, which are further metabolized by other enzymes in the pathway to ergosterol. Can also use substrates not intrinsic to fungi, such as 24,25-dihydrolanosterol (DHL), producing 4,4'-dimethyl-8,14-cholestadien-3-beta-ol, but at lower rates than the endogenous substrates. The polypeptide is Sterol 14-alpha demethylase CYP51A (Gibberella zeae (strain ATCC MYA-4620 / CBS 123657 / FGSC 9075 / NRRL 31084 / PH-1) (Wheat head blight fungus)).